We begin with the raw amino-acid sequence, 67 residues long: MRCFPVFIILLLLIASAPCFDARTKTDDDVPLSPLRDNLKRTIRTRLNIRECCEDGWCCTAAPLTGR.

A signal peptide spans 1–19; sequence MRCFPVFIILLLLIASAPC. Residues 20 to 49 constitute a propeptide that is removed on maturation; it reads FDARTKTDDDVPLSPLRDNLKRTIRTRLNI. Threonine 65 carries the post-translational modification Threonine amide.

Belongs to the conotoxin T superfamily. In terms of processing, contains 2 disulfide bonds that can be either 'C1-C3, C2-C4' or 'C1-C4, C2-C3', since these disulfide connectivities have been observed for conotoxins with cysteine framework V (for examples, see AC P0DQQ7 and AC P81755). As to expression, expressed by the venom duct.

The protein localises to the secreted. This Conus litteratus (Lettered cone) protein is Conotoxin LeDr192.